The primary structure comprises 393 residues: Endoplasmic reticulum junction formation protein lunapark-A (393 aa).

The Cytoplasmic portion of the chain corresponds to methionine 1–arginine 45. The chain crosses the membrane as a helical span at residues leucine 46–isoleucine 66. Topologically, residues proline 67 to arginine 69 are lumenal. A helical transmembrane segment spans residues methionine 70 to leucine 90. Topologically, residues arginine 91 to glutamate 393 are cytoplasmic. Residues isoleucine 95 to lysine 130 are a coiled coil. The tract at residues lysine 146 to threonine 209 is disordered. Residues threonine 176 to proline 190 show a composition bias toward pro residues. A C4-type; plays a role in ER morphology zinc finger spans residues cysteine 269 to cysteine 294. Positions alanine 314–glutamate 393 are disordered. 2 stretches are compositionally biased toward basic and acidic residues: residues glutamate 340–aspartate 353 and glutamate 364–glycine 383.

This sequence belongs to the lunapark family. As to quaternary structure, homodimer; homodimerization requires the C4-type zinc finger motif and decreases during mitosis in a phosphorylation-dependent manner. In terms of processing, phosphorylated. Phosphorylation occurs during interphase. Phosphorylation also occurs during mitosis; these phosphorylations reduce both its homodimerization and the ER three-way tubular junction formation.

It is found in the endoplasmic reticulum membrane. Functionally, endoplasmic reticulum (ER)-shaping membrane protein that plays a role in determining ER morphology. Involved in the stabilization of nascent three-way ER tubular junctions within the ER network. May also play a role as a curvature-stabilizing protein within three-way ER tubular junction network. The chain is Endoplasmic reticulum junction formation protein lunapark-A (lnpka) from Danio rerio (Zebrafish).